The sequence spans 417 residues: Hydroxysteroid dehydrogenase-like protein 2 (417 aa).

Residues 17 to 23 (GASRGIG), Lys42, and Asp74 each bind NADP(+). Tyr168 (proton acceptor) is an active-site residue. Lys172 is an NADP(+) binding site. The SCP2 domain maps to 306–414 (SSPLQETFKA…KLEKILGQMN (109 aa)).

It belongs to the short-chain dehydrogenases/reductases (SDR) family.

The protein localises to the peroxisome. Its subcellular location is the mitochondrion. In terms of biological role, has apparently no steroid dehydrogenase activity. Might act as a metabolic regulator that affects systemic adaptation to nutritional cues. The chain is Hydroxysteroid dehydrogenase-like protein 2 (hsdl2) from Xenopus tropicalis (Western clawed frog).